Consider the following 330-residue polypeptide: Polyprenal reductase (330 aa).

Residues 1-16 (MAGWAGFELSALNPLR) lie on the Cytoplasmic side of the membrane. Residues 17–37 (TLWLALAAAFLFALLLQLAPA) form a helical membrane-spanning segment. Topologically, residues 38–80 (RLLPSCALFQDLLRYGKTKQSGSRRPAVCRAFDVPKRYFSHFY) are lumenal. Residues 81-101 (VISVVWNGSLLWLLSQSLFLG) form a helical membrane-spanning segment. The Cytoplasmic segment spans residues 102–132 (APFPNWLSALLRTLGATQFQALEMESKASRM). A helical transmembrane segment spans residues 133 to 153 (PAAELALSAFLVLVFLWVHSL). Residues 154 to 169 (RRLFECFYVSVFSNAA) lie on the Lumenal side of the membrane. A helical transmembrane segment spans residues 170 to 190 (IHVVQYCFGLVYYVLVGLTVL). At 191 to 206 (SQVPMDDKNVYVLGKN) the chain is on the cytoplasmic side. Residues 207-227 (LLIQARWFHILGMVMFFWSSA) form a helical membrane-spanning segment. Topologically, residues 228–277 (HQYKCHVILSNLRRNKKGVVIHCQHRIPFGDWFEYVSSANYLAELMIYIS) are lumenal. The helical transmembrane segment at 278–298 (MAVTFGLHNLTWWLVVTYVFS) threads the bilayer. Topologically, residues 299-330 (SQALSAFFNHKFYRSTFVSYPKHRKAFLPFLF) are cytoplasmic.

Belongs to the steroid 5-alpha reductase family. Polyprenal reductase subfamily.

The protein localises to the endoplasmic reticulum membrane. It carries out the reaction a di-trans,poly-cis-dolichal + NADP(+) = a di-trans,poly-cis-polyprenal + NADPH + H(+). It catalyses the reaction a 3-oxo-5alpha-steroid + NADP(+) = a 3-oxo-Delta(4)-steroid + NADPH + H(+). The catalysed reaction is androst-4-ene-3,17-dione + NADPH + H(+) = 5alpha-androstan-3,17-dione + NADP(+). The enzyme catalyses 17beta-hydroxy-5alpha-androstan-3-one + NADP(+) = testosterone + NADPH + H(+). Its pathway is protein modification; protein glycosylation. Functionally, plays a key role in early steps of protein N-linked glycosylation by being involved in the conversion of polyprenol into dolichol. Acts as a polyprenal reductase that mediates the reduction of polyprenal into dolichal in a NADP-dependent mechanism. Dolichols are required for the synthesis of dolichol-linked monosaccharides and the oligosaccharide precursor used for N-glycosylation. Also able to convert testosterone (T) into 5-alpha-dihydrotestosterone (DHT). The sequence is that of Polyprenal reductase from Mus musculus (Mouse).